The primary structure comprises 345 residues: Aspartate--ammonia ligase (345 aa).

This sequence belongs to the class-II aminoacyl-tRNA synthetase family. AsnA subfamily.

It localises to the cytoplasm. It catalyses the reaction L-aspartate + NH4(+) + ATP = L-asparagine + AMP + diphosphate + H(+). The protein operates within amino-acid biosynthesis; L-asparagine biosynthesis; L-asparagine from L-aspartate (ammonia route): step 1/1. The chain is Aspartate--ammonia ligase from Bacteroides fragilis (strain ATCC 25285 / DSM 2151 / CCUG 4856 / JCM 11019 / LMG 10263 / NCTC 9343 / Onslow / VPI 2553 / EN-2).